The chain runs to 356 residues: DNA-directed RNA polymerase subunit alpha (356 aa).

Residues 1-259 (MIKAAATLKS…KLMTACLTTL (259 aa)) are alpha N-terminal domain (alpha-NTD). Positions 277–356 (FVQVNYNKME…STYGIELKED (80 aa)) are alpha C-terminal domain (alpha-CTD).

This sequence belongs to the RNA polymerase alpha chain family. As to quaternary structure, in plastids the minimal PEP RNA polymerase catalytic core is composed of four subunits: alpha, beta, beta', and beta''. When a (nuclear-encoded) sigma factor is associated with the core the holoenzyme is formed, which can initiate transcription.

It is found in the plastid. The protein localises to the chloroplast. The enzyme catalyses RNA(n) + a ribonucleoside 5'-triphosphate = RNA(n+1) + diphosphate. DNA-dependent RNA polymerase catalyzes the transcription of DNA into RNA using the four ribonucleoside triphosphates as substrates. The chain is DNA-directed RNA polymerase subunit alpha from Ostreococcus tauri.